Here is a 600-residue protein sequence, read N- to C-terminus: Proline--tRNA ligase (600 aa).

Belongs to the class-II aminoacyl-tRNA synthetase family. ProS type 1 subfamily. In terms of assembly, homodimer.

The protein resides in the cytoplasm. It catalyses the reaction tRNA(Pro) + L-proline + ATP = L-prolyl-tRNA(Pro) + AMP + diphosphate. Its function is as follows. Catalyzes the attachment of proline to tRNA(Pro) in a two-step reaction: proline is first activated by ATP to form Pro-AMP and then transferred to the acceptor end of tRNA(Pro). As ProRS can inadvertently accommodate and process non-cognate amino acids such as alanine and cysteine, to avoid such errors it has two additional distinct editing activities against alanine. One activity is designated as 'pretransfer' editing and involves the tRNA(Pro)-independent hydrolysis of activated Ala-AMP. The other activity is designated 'posttransfer' editing and involves deacylation of mischarged Ala-tRNA(Pro). The misacylated Cys-tRNA(Pro) is not edited by ProRS. The protein is Proline--tRNA ligase of Synechococcus sp. (strain RCC307).